A 173-amino-acid polypeptide reads, in one-letter code: Disulfide bond formation protein B 2 (173 aa).

The Cytoplasmic segment spans residues 1–9 (MSLAGSRLL). Residues 10–26 (FSLVFLVGALASWAAFN) traverse the membrane as a helical segment. The Periplasmic segment spans residues 27–44 (LQTGGGLESCSLWSVQRL). A helical membrane pass occupies residues 45–61 (LLLALGGVNLLAVIQGP). Topologically, residues 62–67 (GRVGRA) are cytoplasmic. The chain crosses the membrane as a helical span at residues 68–85 (VYWGLNLLLGLLGVVTAG). Residues 86 to 142 (RHVLLQNIPSEQLLACLPDMSFMLRQLSWWQALKLTFMGTSDCAEVTWTLLDMSLPE) lie on the Periplasmic side of the membrane. Residues cysteine 101 and cysteine 128 are joined by a disulfide bond. A helical membrane pass occupies residues 143 to 161 (WSLLFFVIMLIFSGYRLWR). Residues 162 to 173 (QLRGARKAVALP) are Cytoplasmic-facing.

Belongs to the DsbB family.

Its subcellular location is the cell inner membrane. Its function is as follows. Required for disulfide bond formation in some periplasmic proteins. Acts by oxidizing the DsbA protein. The protein is Disulfide bond formation protein B 2 of Pseudomonas fluorescens (strain ATCC BAA-477 / NRRL B-23932 / Pf-5).